Here is a 270-residue protein sequence, read N- to C-terminus: Shikimate dehydrogenase (NADP(+)) (270 aa).

Shikimate is bound by residues 15–17 (SLS) and Thr-62. Lys-66 acts as the Proton acceptor in catalysis. Shikimate-binding residues include Asn-87 and Asp-102. NADP(+) contacts are provided by residues 126–130 (GAGGS), 149–154 (NRTVGR), and Ile-210. Residue Tyr-212 participates in shikimate binding. Gly-233 contributes to the NADP(+) binding site.

It belongs to the shikimate dehydrogenase family. As to quaternary structure, homodimer.

The catalysed reaction is shikimate + NADP(+) = 3-dehydroshikimate + NADPH + H(+). It functions in the pathway metabolic intermediate biosynthesis; chorismate biosynthesis; chorismate from D-erythrose 4-phosphate and phosphoenolpyruvate: step 4/7. Functionally, involved in the biosynthesis of the chorismate, which leads to the biosynthesis of aromatic amino acids. Catalyzes the reversible NADPH linked reduction of 3-dehydroshikimate (DHSA) to yield shikimate (SA). The protein is Shikimate dehydrogenase (NADP(+)) of Hyphomonas neptunium (strain ATCC 15444).